A 468-amino-acid chain; its full sequence is Ribulose bisphosphate carboxylase large chain (468 aa).

Lysine 5 is modified (N6,N6,N6-trimethyllysine). The substrate site is built by asparagine 114 and threonine 164. Lysine 166 (proton acceptor) is an active-site residue. A substrate-binding site is contributed by lysine 168. Lysine 192, aspartate 194, and glutamate 195 together coordinate Mg(2+). Lysine 192 is modified (N6-carboxylysine). Histidine 285 (proton acceptor) is an active-site residue. Substrate-binding residues include arginine 286, histidine 318, and serine 370.

The protein belongs to the RuBisCO large chain family. Type I subfamily. As to quaternary structure, heterohexadecamer of 8 large chains and 8 small chains; disulfide-linked. The disulfide link is formed within the large subunit homodimers. Requires Mg(2+) as cofactor. The disulfide bond which can form in the large chain dimeric partners within the hexadecamer appears to be associated with oxidative stress and protein turnover.

The protein resides in the plastid. It is found in the chloroplast. The enzyme catalyses 2 (2R)-3-phosphoglycerate + 2 H(+) = D-ribulose 1,5-bisphosphate + CO2 + H2O. It carries out the reaction D-ribulose 1,5-bisphosphate + O2 = 2-phosphoglycolate + (2R)-3-phosphoglycerate + 2 H(+). Its function is as follows. RuBisCO catalyzes two reactions: the carboxylation of D-ribulose 1,5-bisphosphate, the primary event in carbon dioxide fixation, as well as the oxidative fragmentation of the pentose substrate in the photorespiration process. Both reactions occur simultaneously and in competition at the same active site. The sequence is that of Ribulose bisphosphate carboxylase large chain from Anthospermum herbaceum.